A 660-amino-acid polypeptide reads, in one-letter code: Bifunctional polymyxin resistance protein ArnA (660 aa).

Residues 1 to 304 are formyltransferase ArnAFT; the sequence is MKAVVFAYHD…TLGLVAGARL (304 aa). The Proton donor; for formyltransferase activity role is filled by His104. Residues Arg114 and 136–140 each bind (6R)-10-formyltetrahydrofolate; that span reads VKRAD. The tract at residues 314–660 is dehydrogenase ArnADH; it reads RRTRVLILGV…QSVEPGDAEE (347 aa). Residues Asp347 and 368–369 contribute to the NAD(+) site; that span reads DI. Residues Ala393, Tyr398, and 432–433 each bind UDP-alpha-D-glucuronate; that span reads TS. Glu434 serves as the catalytic Proton acceptor; for decarboxylase activity. Residues Arg460, Asn492, 526 to 535, and Tyr613 contribute to the UDP-alpha-D-glucuronate site; that span reads KLIDGGRQKR. Arg619 acts as the Proton donor; for decarboxylase activity in catalysis.

This sequence in the N-terminal section; belongs to the Fmt family. UDP-L-Ara4N formyltransferase subfamily. It in the C-terminal section; belongs to the NAD(P)-dependent epimerase/dehydratase family. UDP-glucuronic acid decarboxylase subfamily. As to quaternary structure, homohexamer, formed by a dimer of trimers.

It carries out the reaction UDP-alpha-D-glucuronate + NAD(+) = UDP-beta-L-threo-pentopyranos-4-ulose + CO2 + NADH. The catalysed reaction is UDP-4-amino-4-deoxy-beta-L-arabinose + (6R)-10-formyltetrahydrofolate = UDP-4-deoxy-4-formamido-beta-L-arabinose + (6S)-5,6,7,8-tetrahydrofolate + H(+). The protein operates within nucleotide-sugar biosynthesis; UDP-4-deoxy-4-formamido-beta-L-arabinose biosynthesis; UDP-4-deoxy-4-formamido-beta-L-arabinose from UDP-alpha-D-glucuronate: step 1/3. It participates in nucleotide-sugar biosynthesis; UDP-4-deoxy-4-formamido-beta-L-arabinose biosynthesis; UDP-4-deoxy-4-formamido-beta-L-arabinose from UDP-alpha-D-glucuronate: step 3/3. It functions in the pathway bacterial outer membrane biogenesis; lipopolysaccharide biosynthesis. In terms of biological role, bifunctional enzyme that catalyzes the oxidative decarboxylation of UDP-glucuronic acid (UDP-GlcUA) to UDP-4-keto-arabinose (UDP-Ara4O) and the addition of a formyl group to UDP-4-amino-4-deoxy-L-arabinose (UDP-L-Ara4N) to form UDP-L-4-formamido-arabinose (UDP-L-Ara4FN). The modified arabinose is attached to lipid A and is required for resistance to polymyxin and cationic antimicrobial peptides. The chain is Bifunctional polymyxin resistance protein ArnA from Erwinia tasmaniensis (strain DSM 17950 / CFBP 7177 / CIP 109463 / NCPPB 4357 / Et1/99).